The sequence spans 130 residues: Small ribosomal subunit protein uS9 (130 aa).

The protein belongs to the universal ribosomal protein uS9 family.

The sequence is that of Small ribosomal subunit protein uS9 from Carboxydothermus hydrogenoformans (strain ATCC BAA-161 / DSM 6008 / Z-2901).